Consider the following 211-residue polypeptide: Uracil phosphoribosyltransferase (211 aa).

Residues Arg-78, Arg-103, and Asp-130–Thr-138 each bind 5-phospho-alpha-D-ribose 1-diphosphate. Uracil is bound by residues Ile-196 and Gly-201–Ala-203. A 5-phospho-alpha-D-ribose 1-diphosphate-binding site is contributed by Asp-202.

Belongs to the UPRTase family. Mg(2+) serves as cofactor.

It catalyses the reaction UMP + diphosphate = 5-phospho-alpha-D-ribose 1-diphosphate + uracil. The protein operates within pyrimidine metabolism; UMP biosynthesis via salvage pathway; UMP from uracil: step 1/1. With respect to regulation, allosterically activated by GTP. Catalyzes the conversion of uracil and 5-phospho-alpha-D-ribose 1-diphosphate (PRPP) to UMP and diphosphate. This chain is Uracil phosphoribosyltransferase, found in Kineococcus radiotolerans (strain ATCC BAA-149 / DSM 14245 / SRS30216).